A 352-amino-acid polypeptide reads, in one-letter code: MTHISERLLVQAHLAAKQPRVLSEQESAEHRAAIAAELKAQNAVLVAHYYCDPVIQALAEETGGCVSDSLEMARFGNQHPAQTVVVAGVRFMGETAKILNPEKRVLMPTLEATCSLDLGCPVDEFSAFCDQHPERTVVVYANTSAAVKARADWVVTSSCAVEIVEHLMDNGEPILWAPDQHLGRYIQRETGADMLLWDGACIVHEEFKAKQLEDMKALYPDAAILVHPESPESVVALADAVGSTSQLIKAAQTLPNKTFIVATDRGIFYKMQQLCPDKDFIEAPTAGNGAACRSCAHCPWMAMNTLERTLACLREGSGEIFVDPALIPRAVRPLKRMLDFTQAARLRQAGNA.

Residues His-48 and Ser-69 each contribute to the iminosuccinate site. Cys-114 is a binding site for [4Fe-4S] cluster. Iminosuccinate contacts are provided by residues 140-142 (YAN) and Ser-157. [4Fe-4S] cluster is bound at residue Cys-201. Iminosuccinate is bound by residues 227-229 (HPE) and Thr-244. Cys-298 is a binding site for [4Fe-4S] cluster.

It belongs to the quinolinate synthase family. Type 1 subfamily. It depends on [4Fe-4S] cluster as a cofactor.

The protein localises to the cytoplasm. The catalysed reaction is iminosuccinate + dihydroxyacetone phosphate = quinolinate + phosphate + 2 H2O + H(+). Its pathway is cofactor biosynthesis; NAD(+) biosynthesis; quinolinate from iminoaspartate: step 1/1. Its function is as follows. Catalyzes the condensation of iminoaspartate with dihydroxyacetone phosphate to form quinolinate. The chain is Quinolinate synthase from Pseudomonas aeruginosa (strain UCBPP-PA14).